The following is a 769-amino-acid chain: Calcium up-regulated protein B (769 aa).

A disordered region spans residues 1–22 (MINIEDISKSSNQSEEKQLKST). Ricin B-type lectin domains follow at residues 25-145 (KPKY…WTTF) and 158-296 (FQSK…WITN).

It belongs to the cup family.

It is found in the cytoplasm. The protein localises to the membrane. In terms of biological role, may play an important role in stabilizing and/or regulating the cell membrane during Ca(2+) stress or certain stages of development. The polypeptide is Calcium up-regulated protein B (cupB) (Dictyostelium discoideum (Social amoeba)).